The following is a 619-amino-acid chain: MKKGKLGAIVFGLLFTSSVAGFSKDLTKDNAYQDLNVIEHLISLKYAPLPWKELLFGWDLSQQTQQARLQLVLEEKPTTNYCQKVLSNYVRSLNDYHAGITFYRTESAYIPYVLKLSEDGHVFVVDVQTSQGDIYLGDEILEVDGMGIREAIESLRFGRGSATDYSAAVRSLTSRSAAFGDAVPSGIAMLKLRRPSGLIRSTPVRWRYTPEHIGDFSLVAPLIPEHKPQLPTQSCVLFRSGVNSQSSSSSLFSSYMVPYFWEELRVQNKQRFDSNHHIGSRNGFLPTFGPILWEQDKGPYRSYIFKAKDSQGNPHRIGFLRISSYVWTDLEGLEEDHKDSPWELFGEIIDHLEKETDALIIDQTHNPGGSVFYLYSLLSMLTDHPLDTPKHRMIFTQDEVSSALHWQDLLEDVFTDEQAVAVLGETMEGYCMDMHAVASLQNFSQSVLSSWVSGDINLSKPMPLLGFAQVRPHPKHQYTKPLFMLIDEDDFSCGDLAPAILKDNGRATLIGKPTAGAGGFVFQVTFPNRSGIKGLSLTGSLAVRKDGEFIENLGVAPHIDLGFTSRDLQTSRFTDYVEAVKTIVLTSLSENAKKSEEQTSPQETPEVIRVSYPTTTSAL.

Positions 591 to 619 are disordered; sequence NAKKSEEQTSPQETPEVIRVSYPTTTSAL.

It belongs to the chlamydial CPn_1016/CT_858/TC_0248 family.

The sequence is that of Protein CPn_1016/CP_0837/CPj1016/CpB1054 from Chlamydia pneumoniae (Chlamydophila pneumoniae).